A 409-amino-acid chain; its full sequence is Elongation factor Tu, plastid (409 aa).

In terms of domain architecture, tr-type G spans Lys-10 to Ile-214. Positions Gly-19 to Thr-26 are G1. Residue Gly-19–Thr-26 coordinates GTP. Mg(2+) is bound at residue Thr-26. Residues Gly-60 to Asn-64 are G2. Residues Asp-81 to Gly-84 are G3. GTP is bound by residues Asp-81 to His-85 and Asn-136 to Asp-139. A G4 region spans residues Asn-136–Asp-139. Positions Ser-174–Leu-176 are G5.

Belongs to the TRAFAC class translation factor GTPase superfamily. Classic translation factor GTPase family. EF-Tu/EF-1A subfamily.

It is found in the plastid. The catalysed reaction is GTP + H2O = GDP + phosphate + H(+). In terms of biological role, GTP hydrolase that promotes the GTP-dependent binding of aminoacyl-tRNA to the A-site of ribosomes during protein biosynthesis. In Euglena longa (Euglenophycean alga), this protein is Elongation factor Tu, plastid (tufA).